The following is a 285-amino-acid chain: Probable endonuclease 4 (285 aa).

9 residues coordinate Zn(2+): H69, H109, E145, D179, H182, H216, D229, H231, and E261.

This sequence belongs to the AP endonuclease 2 family. Zn(2+) serves as cofactor.

It carries out the reaction Endonucleolytic cleavage to 5'-phosphooligonucleotide end-products.. Its function is as follows. Endonuclease IV plays a role in DNA repair. It cleaves phosphodiester bonds at apurinic or apyrimidinic (AP) sites, generating a 3'-hydroxyl group and a 5'-terminal sugar phosphate. This Escherichia coli (strain SMS-3-5 / SECEC) protein is Probable endonuclease 4.